Consider the following 447-residue polypeptide: UPF0210 protein LAF_0976 (447 aa).

The protein belongs to the UPF0210 family. Homodimer.

In Limosilactobacillus fermentum (strain NBRC 3956 / LMG 18251) (Lactobacillus fermentum), this protein is UPF0210 protein LAF_0976.